The chain runs to 285 residues: Polyamine aminopropyltransferase (285 aa).

Residues 5–241 (DTWFTEHFQT…GWWSVTLSSK (237 aa)) form the PABS domain. Residue Q35 coordinates S-methyl-5'-thioadenosine. 2 residues coordinate spermidine: H66 and D90. S-methyl-5'-thioadenosine contacts are provided by residues D110 and 141-142 (DG). Catalysis depends on D160, which acts as the Proton acceptor. A spermidine-binding site is contributed by 160–163 (DSTD). P167 lines the S-methyl-5'-thioadenosine pocket.

The protein belongs to the spermidine/spermine synthase family. As to quaternary structure, homodimer or homotetramer.

The protein resides in the cytoplasm. It catalyses the reaction S-adenosyl 3-(methylsulfanyl)propylamine + putrescine = S-methyl-5'-thioadenosine + spermidine + H(+). It functions in the pathway amine and polyamine biosynthesis; spermidine biosynthesis; spermidine from putrescine: step 1/1. Functionally, catalyzes the irreversible transfer of a propylamine group from the amino donor S-adenosylmethioninamine (decarboxy-AdoMet) to putrescine (1,4-diaminobutane) to yield spermidine. The protein is Polyamine aminopropyltransferase of Xylella fastidiosa (strain Temecula1 / ATCC 700964).